Here is a 191-residue protein sequence, read N- to C-terminus: Cytochrome c biogenesis ATP-binding export protein CcmA (191 aa).

The region spanning 2–190 (LSLHQLQFKN…SIKSAQILRI (189 aa)) is the ABC transporter domain. ATP is bound at residue 29-36 (GANGCGKS).

Belongs to the ABC transporter superfamily. CcmA exporter (TC 3.A.1.107) family. In terms of assembly, the complex is composed of two ATP-binding proteins (CcmA) and two transmembrane proteins (CcmB).

The protein resides in the cell inner membrane. The enzyme catalyses heme b(in) + ATP + H2O = heme b(out) + ADP + phosphate + H(+). Functionally, part of the ABC transporter complex CcmAB involved in the biogenesis of c-type cytochromes; once thought to export heme, this seems not to be the case, but its exact role is uncertain. Responsible for energy coupling to the transport system. The chain is Cytochrome c biogenesis ATP-binding export protein CcmA from Rickettsia conorii (strain ATCC VR-613 / Malish 7).